The sequence spans 409 residues: MAPPAGGTAAGSDPGSAAVLLAVHVAVRPLGAGLDVAAQPRRLQLSADPERPGRFRLEMLGAGPGAVILEWPLESVSYTVRGPCQHELQPPPGGPGTLSLHFANPQEAQRWAALVRDATVEGQNGSDSLPPALGPETRPVSPPSPLEVPTPKAPKPKVDLPWSPGDLMEKEELAGRLTRAVEGGDEKGAAQAAAILAQRHVALRVQLQEAYFPPGPIRLQVTVEDAASSAHVSLQVHPHCTIRALQEQVFSEFGFPPAVQRWVIGRCLCVPEHSLAFYGVQRDGDPAFLYLLSAPREAPGRSPQRPQKVDGELGRLFPQSLGLPPTPQPTSSSLPSPLQPGWPCPSCTFINAPSRPGCEMCSTQRPCAWDPLPTASIQQLPKVTRREDGPSLPGPRSLDPLLNLSGNLC.

A self-association region spans residues 1-178 (MAPPAGGTAA…EKEELAGRLT (178 aa)). The segment at 121–164 (EGQNGSDSLPPALGPETRPVSPPSPLEVPTPKAPKPKVDLPWSP) is disordered. Residues 140-153 (VSPPSPLEVPTPKA) show a composition bias toward pro residues. Phosphoserine is present on serine 163. Positions 173–300 (LAGRLTRAVE…LLSAPREAPG (128 aa)) are interaction with SHANK1. Residues 217–280 (IRLQVTVEDA…PEHSLAFYGV (64 aa)) enclose the Ubiquitin-like domain. Serine 302 bears the Phosphoserine mark. Residues 315–337 (RLFPQSLGLPPTPQPTSSSLPSP) form a disordered region. Low complexity predominate over residues 318-336 (PQSLGLPPTPQPTSSSLPS). The RanBP2-type zinc finger occupies 338–367 (LQPGWPCPSCTFINAPSRPGCEMCSTQRPC). The segment at 384-409 (TRREDGPSLPGPRSLDPLLNLSGNLC) is disordered.

As to quaternary structure, monomer and homodimer. Component of the LUBAC complex (linear ubiquitin chain assembly complex) which consists of SHARPIN, RBCK1 and RNF31. LUBAC has a MW of approximately 600 kDa suggesting a heteromultimeric assembly of its subunits. Associates with the TNF-R1 signaling complex (TNF-RSC) in a stimulation-dependent manner. Interacts with EYA1, EYA2, SHANK1 and SHANK3 (via ANK repeats).

The protein resides in the cytoplasm. It localises to the cytosol. Its subcellular location is the synapse. It functions in the pathway protein modification; protein ubiquitination. Its function is as follows. Component of the LUBAC complex which conjugates linear polyubiquitin chains in a head-to-tail manner to substrates and plays a key role in NF-kappa-B activation and regulation of inflammation. LUBAC conjugates linear polyubiquitin to IKBKG and RIPK1 and is involved in activation of the canonical NF-kappa-B and the JNK signaling pathways. Linear ubiquitination mediated by the LUBAC complex interferes with TNF-induced cell death and thereby prevents inflammation. LUBAC is recruited to the TNF-R1 signaling complex (TNF-RSC) following polyubiquitination of TNF-RSC components by BIRC2 and/or BIRC3 and to conjugate linear polyubiquitin to IKBKG and possibly other components contributing to the stability of the complex. The LUBAC complex is also involved in innate immunity by conjugating linear polyubiquitin chains at the surface of bacteria invading the cytosol to form the ubiquitin coat surrounding bacteria. LUBAC is not able to initiate formation of the bacterial ubiquitin coat, and can only promote formation of linear polyubiquitins on pre-existing ubiquitin. The bacterial ubiquitin coat acts as an 'eat-me' signal for xenophagy and promotes NF-kappa-B activation. Together with OTULIN, the LUBAC complex regulates the canonical Wnt signaling during angiogenesis. The sequence is that of Sharpin (SHARPIN) from Bos taurus (Bovine).